The primary structure comprises 332 residues: Beta-1,3-N-acetylglucosaminyltransferase radical fringe (332 aa).

Residues 1–6 (MSRARR) are Cytoplasmic-facing. Residues 7–29 (VLCRACLALAAVLAVLLLLPLPL) form a helical; Signal-anchor for type II membrane protein membrane-spanning segment. Residues 30–332 (PLPLPRAPAP…MKNRVEGAFQ (303 aa)) are Lumenal-facing. Arg75 provides a ligand contact to substrate. The N-linked (GlcNAc...) asparagine glycan is linked to Asn114. 2 disulfide bridges follow: Cys115-Cys126 and Cys144-Cys208. Asp148 is a substrate binding site. Asp149 contributes to the Mn(2+) binding site. Residue Asp238 is part of the active site. Position 262 (His262) interacts with Mn(2+). Cys312 and Cys321 are joined by a disulfide.

It belongs to the glycosyltransferase 31 family. The cofactor is Mn(2+). Detected in all the examined tissues (12.5 dpc). High expression found in adult brain.

The protein localises to the golgi apparatus membrane. The enzyme catalyses 3-O-(alpha-L-fucosyl)-L-threonyl-[EGF-like domain protein] + UDP-N-acetyl-alpha-D-glucosamine = 3-O-(N-acetyl-beta-D-glucosaminyl-(1-&gt;3)-alpha-L-fucosyl)-L-threonyl-[EGF-like domain protein] + UDP + H(+). It catalyses the reaction 3-O-(alpha-L-fucosyl)-L-seryl-[EGF-like domain protein] + UDP-N-acetyl-alpha-D-glucosamine = 3-O-(N-acetyl-beta-D-glucosaminyl-(1-&gt;3)-alpha-L-fucosyl)-L-seryl-[EGF-like domain protein] + UDP + H(+). Glycosyltransferase that initiates the elongation of O-linked fucose residues attached to EGF-like repeats in the extracellular domain of Notch molecules. Modulates NOTCH1 activity by modifying O-fucose residues at specific EGF-like domains resulting in enhancement of NOTCH1 activation by DLL1 and JAG1. May be involved in limb formation and in neurogenesis. This chain is Beta-1,3-N-acetylglucosaminyltransferase radical fringe, found in Mus musculus (Mouse).